A 251-amino-acid chain; its full sequence is Hydroxyacylglutathione hydrolase (251 aa).

Positions 53, 55, 57, 58, 110, 127, and 165 each coordinate Zn(2+).

This sequence belongs to the metallo-beta-lactamase superfamily. Glyoxalase II family. Monomer. Zn(2+) serves as cofactor.

The enzyme catalyses an S-(2-hydroxyacyl)glutathione + H2O = a 2-hydroxy carboxylate + glutathione + H(+). It functions in the pathway secondary metabolite metabolism; methylglyoxal degradation; (R)-lactate from methylglyoxal: step 2/2. Its function is as follows. Thiolesterase that catalyzes the hydrolysis of S-D-lactoyl-glutathione to form glutathione and D-lactic acid. The polypeptide is Hydroxyacylglutathione hydrolase (Escherichia coli (strain SE11)).